Reading from the N-terminus, the 231-residue chain is Urease accessory protein UreE (231 aa).

Positions 185 to 231 (VASPLDEPHGSGLHIHGIHSHGEGHSHGDHDHDHSHSHGDHDHDHKH) are disordered. The span at 204-231 (SHGEGHSHGDHDHDHSHSHGDHDHDHKH) shows a compositional bias: basic and acidic residues.

Belongs to the UreE family.

It localises to the cytoplasm. Functionally, involved in urease metallocenter assembly. Binds nickel. Probably functions as a nickel donor during metallocenter assembly. This chain is Urease accessory protein UreE, found in Yersinia pseudotuberculosis serotype O:1b (strain IP 31758).